Here is a 264-residue protein sequence, read N- to C-terminus: uncharacterized protein (264 aa).

This is an uncharacterized protein from Escherichia coli (strain K12).